Reading from the N-terminus, the 235-residue chain is MSRLGFEQFPDYQVPGMKHPDFSPYESNGGSIVAIAGDDFAVIAADTRLSSGYNIHSRTQSKLFKLSPQTVLGSAGCWADTLSLTGSIKVRMQSYEHTHLRTMTTEAVAQMLSIAMYNRRFFPYYVSNILAGIDNEGKGVVYSYDPIGHCEKATYRAGGTAGTLLQPVLDNQIGHKNMNLEDADKIKLTKERAVSVASDTFISAAERDIYTGDSVLINIITKDGIEVRTLTLRQD.

The propeptide occupies 1-20; that stretch reads MSRLGFEQFPDYQVPGMKHP.

This sequence belongs to the peptidase T1B family. The 26S proteasome consists of a 20S proteasome core and two 19S regulatory subunits. The 20S proteasome core is composed of 28 subunits that are arranged in four stacked rings, resulting in a barrel-shaped structure. The two end rings are each formed by seven alpha subunits, and the two central rings are each formed by seven beta subunits. The catalytic chamber with the active sites is on the inside of the barrel.

The protein resides in the cytoplasm. It localises to the nucleus. Non-catalytic component of the proteasome, a multicatalytic proteinase complex which is characterized by its ability to cleave peptides with Arg, Phe, Tyr, Leu, and Glu adjacent to the leaving group at neutral or slightly basic pH. The proteasome has an ATP-dependent proteolytic activity. The chain is Proteasome subunit beta type-1 (Prosbeta6) from Drosophila melanogaster (Fruit fly).